Reading from the N-terminus, the 420-residue chain is Gamma-glutamyl phosphate reductase (420 aa).

This sequence belongs to the gamma-glutamyl phosphate reductase family.

It is found in the cytoplasm. The catalysed reaction is L-glutamate 5-semialdehyde + phosphate + NADP(+) = L-glutamyl 5-phosphate + NADPH + H(+). It functions in the pathway amino-acid biosynthesis; L-proline biosynthesis; L-glutamate 5-semialdehyde from L-glutamate: step 2/2. Functionally, catalyzes the NADPH-dependent reduction of L-glutamate 5-phosphate into L-glutamate 5-semialdehyde and phosphate. The product spontaneously undergoes cyclization to form 1-pyrroline-5-carboxylate. This chain is Gamma-glutamyl phosphate reductase, found in Oenococcus oeni (strain ATCC BAA-331 / PSU-1).